The primary structure comprises 399 residues: ATP phosphoribosyltransferase regulatory subunit (399 aa).

It belongs to the class-II aminoacyl-tRNA synthetase family. HisZ subfamily. As to quaternary structure, heteromultimer composed of HisG and HisZ subunits.

It is found in the cytoplasm. The protein operates within amino-acid biosynthesis; L-histidine biosynthesis; L-histidine from 5-phospho-alpha-D-ribose 1-diphosphate: step 1/9. Its function is as follows. Required for the first step of histidine biosynthesis. May allow the feedback regulation of ATP phosphoribosyltransferase activity by histidine. This Symbiobacterium thermophilum (strain DSM 24528 / JCM 14929 / IAM 14863 / T) protein is ATP phosphoribosyltransferase regulatory subunit.